The primary structure comprises 342 residues: Isopentenyl-diphosphate delta-isomerase (342 aa).

A substrate-binding site is contributed by 11–12; the sequence is RK. FMN contacts are provided by residues Ser68, 69–71, Ser99, and Asn127; that span reads SMT. Residue 99-101 participates in substrate binding; it reads SMR. Gln162 contributes to the substrate binding site. Position 163 (Glu163) interacts with Mg(2+). FMN contacts are provided by residues Lys194, Thr224, 274 to 276, and 295 to 296; these read GLK and AG.

It belongs to the IPP isomerase type 2 family. Homooctamer. Dimer of tetramers. FMN serves as cofactor. It depends on NADPH as a cofactor. The cofactor is Mg(2+).

It localises to the cytoplasm. The enzyme catalyses isopentenyl diphosphate = dimethylallyl diphosphate. Its function is as follows. Involved in the biosynthesis of isoprenoids. Catalyzes the 1,3-allylic rearrangement of the homoallylic substrate isopentenyl (IPP) to its allylic isomer, dimethylallyl diphosphate (DMAPP). The chain is Isopentenyl-diphosphate delta-isomerase from Rickettsia canadensis (strain McKiel).